The primary structure comprises 243 residues: uncharacterized protein (243 aa).

This is an uncharacterized protein from Orgyia pseudotsugata multicapsid polyhedrosis virus (OpMNPV).